Consider the following 277-residue polypeptide: Putative gamma-glutamylcyclotransferase YkqA (277 aa).

8–11 provides a ligand contact to substrate; sequence YGTL. Glutamate 205 functions as the Proton acceptor in the catalytic mechanism.

The protein belongs to the gamma-glutamylcyclotransferase family.

In terms of biological role, putative gamma-glutamylcyclotransferase. The protein is Putative gamma-glutamylcyclotransferase YkqA (ykqA) of Bacillus subtilis (strain 168).